The following is a 122-amino-acid chain: Small ribosomal subunit protein uS13 (122 aa).

The disordered stretch occupies residues 93-122 (RKGLPVRGQTTKNNARTRKGKRKTVGSASK). Positions 107 to 116 (ARTRKGKRKT) are enriched in basic residues.

The protein belongs to the universal ribosomal protein uS13 family. In terms of assembly, part of the 30S ribosomal subunit. Forms a loose heterodimer with protein S19. Forms two bridges to the 50S subunit in the 70S ribosome.

Functionally, located at the top of the head of the 30S subunit, it contacts several helices of the 16S rRNA. In the 70S ribosome it contacts the 23S rRNA (bridge B1a) and protein L5 of the 50S subunit (bridge B1b), connecting the 2 subunits; these bridges are implicated in subunit movement. Contacts the tRNAs in the A and P-sites. This chain is Small ribosomal subunit protein uS13, found in Wolinella succinogenes (strain ATCC 29543 / DSM 1740 / CCUG 13145 / JCM 31913 / LMG 7466 / NCTC 11488 / FDC 602W) (Vibrio succinogenes).